The primary structure comprises 667 residues: Bifunctional polymyxin resistance protein ArnA (667 aa).

A formyltransferase ArnAFT region spans residues 1–304 (MKAIVFAYHD…EMGIVTDVRL (304 aa)). The active-site Proton donor; for formyltransferase activity is the H104. (6R)-10-formyltetrahydrofolate is bound by residues R114 and 136–140 (VKKAD). Positions 314 to 667 (RRTRVLILGV…TAAPKDELNA (354 aa)) are dehydrogenase ArnADH. Residues D347 and 368 to 369 (DI) contribute to the NAD(+) site. UDP-alpha-D-glucuronate is bound by residues A393, Y398, and 432–433 (TS). Residue E434 is the Proton acceptor; for decarboxylase activity of the active site. UDP-alpha-D-glucuronate is bound by residues R460, N492, 526 to 535 (KLVDGGAQKR), and Y613. R619 functions as the Proton donor; for decarboxylase activity in the catalytic mechanism.

It in the N-terminal section; belongs to the Fmt family. UDP-L-Ara4N formyltransferase subfamily. This sequence in the C-terminal section; belongs to the NAD(P)-dependent epimerase/dehydratase family. UDP-glucuronic acid decarboxylase subfamily. Homohexamer, formed by a dimer of trimers.

It catalyses the reaction UDP-alpha-D-glucuronate + NAD(+) = UDP-beta-L-threo-pentopyranos-4-ulose + CO2 + NADH. The enzyme catalyses UDP-4-amino-4-deoxy-beta-L-arabinose + (6R)-10-formyltetrahydrofolate = UDP-4-deoxy-4-formamido-beta-L-arabinose + (6S)-5,6,7,8-tetrahydrofolate + H(+). It functions in the pathway nucleotide-sugar biosynthesis; UDP-4-deoxy-4-formamido-beta-L-arabinose biosynthesis; UDP-4-deoxy-4-formamido-beta-L-arabinose from UDP-alpha-D-glucuronate: step 1/3. The protein operates within nucleotide-sugar biosynthesis; UDP-4-deoxy-4-formamido-beta-L-arabinose biosynthesis; UDP-4-deoxy-4-formamido-beta-L-arabinose from UDP-alpha-D-glucuronate: step 3/3. It participates in bacterial outer membrane biogenesis; lipopolysaccharide biosynthesis. Bifunctional enzyme that catalyzes the oxidative decarboxylation of UDP-glucuronic acid (UDP-GlcUA) to UDP-4-keto-arabinose (UDP-Ara4O) and the addition of a formyl group to UDP-4-amino-4-deoxy-L-arabinose (UDP-L-Ara4N) to form UDP-L-4-formamido-arabinose (UDP-L-Ara4FN). The modified arabinose is attached to lipid A and is required for resistance to polymyxin and cationic antimicrobial peptides. The sequence is that of Bifunctional polymyxin resistance protein ArnA from Yersinia pestis bv. Antiqua (strain Antiqua).